A 629-amino-acid chain; its full sequence is Rho GTPase-activating protein conundrum (629 aa).

Residues 185 to 294 (PPKSGTYADI…CRDSSSLDSC (110 aa)) form a required for interaction with Moe region. Positions 237-261 (SIGRSKESRSENDARSQKKKSSEVL) are disordered. Basic and acidic residues predominate over residues 240 to 258 (RSKESRSENDARSQKKKSS). Residues 359 to 565 (VSINALIRRD…ILILRGEKLF (207 aa)) form the Rho-GAP domain.

Interacts with Moe (via FERM domain).

Its subcellular location is the cytoplasm. The protein localises to the cell membrane. It localises to the cell cortex. It is found in the cell junction. In terms of biological role, GTPase-activating protein (GAP) for Rho1; functions with the ERM protein Moe to regulate Rho1 and control proliferation in the developing epithelium. Recruited by Moe to the cell cortex where it negatively regulates Rho1 activity. Can also promote cell proliferation independently of its GAP activity, perhaps by acting with Arf6 to positively regulate Rac1. The polypeptide is Rho GTPase-activating protein conundrum (Drosophila melanogaster (Fruit fly)).